Here is a 327-residue protein sequence, read N- to C-terminus: DNA-directed RNA polymerase subunit alpha (327 aa).

An alpha N-terminal domain (alpha-NTD) region spans residues 1–233 (MVREKVKVST…NLFIPFLHVE (233 aa)). An alpha C-terminal domain (alpha-CTD) region spans residues 267–327 (LAFQYIFIDQ…KKILDILEKK (61 aa)).

Belongs to the RNA polymerase alpha chain family. As to quaternary structure, in plastids the minimal PEP RNA polymerase catalytic core is composed of four subunits: alpha, beta, beta', and beta''. When a (nuclear-encoded) sigma factor is associated with the core the holoenzyme is formed, which can initiate transcription.

Its subcellular location is the plastid. The protein resides in the chloroplast. The catalysed reaction is RNA(n) + a ribonucleoside 5'-triphosphate = RNA(n+1) + diphosphate. Functionally, DNA-dependent RNA polymerase catalyzes the transcription of DNA into RNA using the four ribonucleoside triphosphates as substrates. The chain is DNA-directed RNA polymerase subunit alpha from Nasturtium officinale (Watercress).